The primary structure comprises 57 residues: Delta-elapitoxin-Cb1a (57 aa).

Cystine bridges form between cysteine 3–cysteine 22, cysteine 15–cysteine 36, cysteine 40–cysteine 49, and cysteine 50–cysteine 55.

The protein belongs to the three-finger toxin family. Short-chain subfamily. In terms of tissue distribution, expressed by the venom gland.

The protein resides in the secreted. Its function is as follows. This toxin shifts the voltage-dependence of Nav1.4/SCN4A activation to more hyperpolarised potentials, inhibits inactivation, and produces large ramp currents, consistent with its profound effects on contractile force in an isolated skeletal muscle preparation. This toxin produces large muscle contractions and fasciculations in the indirectly stimulated chick biventer cervicis nerve-muscle assay, which are significantly inhibited by the addition of the sodium channel antagonist tetrodotoxin. This Calliophis bivirgatus (Blue Malaysian coral snake) protein is Delta-elapitoxin-Cb1a.